We begin with the raw amino-acid sequence, 401 residues long: S-adenosylmethionine synthase (401 aa).

135–140 (GHGSGD) contributes to the ATP binding site.

It belongs to the AdoMet synthase 2 family. It depends on Mg(2+) as a cofactor.

It catalyses the reaction L-methionine + ATP + H2O = S-adenosyl-L-methionine + phosphate + diphosphate. It functions in the pathway amino-acid biosynthesis; S-adenosyl-L-methionine biosynthesis; S-adenosyl-L-methionine from L-methionine: step 1/1. In terms of biological role, catalyzes the formation of S-adenosylmethionine from methionine and ATP. This is S-adenosylmethionine synthase from Methanobrevibacter smithii (strain ATCC 35061 / DSM 861 / OCM 144 / PS).